We begin with the raw amino-acid sequence, 102 residues long: Small ribosomal subunit protein uS10 (102 aa).

The protein belongs to the universal ribosomal protein uS10 family. Part of the 30S ribosomal subunit.

Involved in the binding of tRNA to the ribosomes. The sequence is that of Small ribosomal subunit protein uS10 from Brevibacillus brevis (strain 47 / JCM 6285 / NBRC 100599).